Consider the following 422-residue polypeptide: Glutamate-1-semialdehyde 2,1-aminomutase (422 aa).

Residue K264 is modified to N6-(pyridoxal phosphate)lysine.

The protein belongs to the class-III pyridoxal-phosphate-dependent aminotransferase family. HemL subfamily. In terms of assembly, homodimer. Pyridoxal 5'-phosphate is required as a cofactor.

It localises to the cytoplasm. It carries out the reaction (S)-4-amino-5-oxopentanoate = 5-aminolevulinate. Its pathway is porphyrin-containing compound metabolism; protoporphyrin-IX biosynthesis; 5-aminolevulinate from L-glutamyl-tRNA(Glu): step 2/2. This Clostridium kluyveri (strain ATCC 8527 / DSM 555 / NBRC 12016 / NCIMB 10680 / K1) protein is Glutamate-1-semialdehyde 2,1-aminomutase.